We begin with the raw amino-acid sequence, 149 residues long: Large ribosomal subunit protein uL15 (149 aa).

2 stretches are compositionally biased toward basic residues: residues methionine 1–histidine 14 and arginine 21–glycine 30. Positions methionine 1 to threonine 43 are disordered.

It belongs to the universal ribosomal protein uL15 family. In terms of assembly, component of the large ribosomal subunit (LSU). Mature N.crassa ribosomes consist of a small (40S) and a large (60S) subunit. The 40S small subunit contains 1 molecule of ribosomal RNA (18S rRNA) and at least 32 different proteins. The large 60S subunit contains 3 rRNA molecules (26S, 5.8S and 5S rRNA) and at least 42 different proteins.

The protein localises to the cytoplasm. In terms of biological role, component of the ribosome, a large ribonucleoprotein complex responsible for the synthesis of proteins in the cell. The small ribosomal subunit (SSU) binds messenger RNAs (mRNAs) and translates the encoded message by selecting cognate aminoacyl-transfer RNA (tRNA) molecules. The large subunit (LSU) contains the ribosomal catalytic site termed the peptidyl transferase center (PTC), which catalyzes the formation of peptide bonds, thereby polymerizing the amino acids delivered by tRNAs into a polypeptide chain. The nascent polypeptides leave the ribosome through a tunnel in the LSU and interact with protein factors that function in enzymatic processing, targeting, and the membrane insertion of nascent chains at the exit of the ribosomal tunnel. The sequence is that of Large ribosomal subunit protein uL15 (rpl-28) from Neurospora crassa (strain ATCC 24698 / 74-OR23-1A / CBS 708.71 / DSM 1257 / FGSC 987).